We begin with the raw amino-acid sequence, 402 residues long: NADH dehydrogenase [ubiquinone] 1 alpha subcomplex subunit 9, mitochondrial (402 aa).

A mitochondrion-targeting transit peptide spans 1 to 43 (MQVVSRRLVQRPLVGGASIYSSSSLRSLYGVSNHLNGTDNCRY).

This sequence belongs to the complex I NDUFA9 subunit family. Complex I is composed of at least 49 different subunits. This a component of the hydrophobic protein fraction. Requires FAD as cofactor.

It is found in the mitochondrion matrix. Its function is as follows. Accessory subunit of the mitochondrial membrane respiratory chain NADH dehydrogenase (Complex I), that is believed not to be involved in catalysis. Complex I functions in the transfer of electrons from NADH to the respiratory chain. The immediate electron acceptor for the enzyme is believed to be ubiquinone. This is NADH dehydrogenase [ubiquinone] 1 alpha subcomplex subunit 9, mitochondrial from Arabidopsis thaliana (Mouse-ear cress).